The following is a 121-amino-acid chain: Large ribosomal subunit protein bL12 (121 aa).

Belongs to the bacterial ribosomal protein bL12 family. As to quaternary structure, homodimer. Part of the ribosomal stalk of the 50S ribosomal subunit. Forms a multimeric L10(L12)X complex, where L10 forms an elongated spine to which 2 to 4 L12 dimers bind in a sequential fashion. Binds GTP-bound translation factors.

Functionally, forms part of the ribosomal stalk which helps the ribosome interact with GTP-bound translation factors. Is thus essential for accurate translation. This is Large ribosomal subunit protein bL12 from Ureaplasma parvum serovar 3 (strain ATCC 27815 / 27 / NCTC 11736).